A 121-amino-acid chain; its full sequence is Ribonuclease P protein component (121 aa).

This sequence belongs to the RnpA family. In terms of assembly, consists of a catalytic RNA component (M1 or rnpB) and a protein subunit.

The catalysed reaction is Endonucleolytic cleavage of RNA, removing 5'-extranucleotides from tRNA precursor.. In terms of biological role, RNaseP catalyzes the removal of the 5'-leader sequence from pre-tRNA to produce the mature 5'-terminus. It can also cleave other RNA substrates such as 4.5S RNA. The protein component plays an auxiliary but essential role in vivo by binding to the 5'-leader sequence and broadening the substrate specificity of the ribozyme. This is Ribonuclease P protein component from Neisseria gonorrhoeae (strain ATCC 700825 / FA 1090).